Here is a 221-residue protein sequence, read N- to C-terminus: Lipoprotein-releasing system ATP-binding protein LolD (221 aa).

Residues 6-220 form the ABC transporter domain; that stretch reads LTLKNVSKHY…YKLKHGALNM (215 aa). ATP is bound at residue 42–49; that stretch reads GSSGSGKS.

Belongs to the ABC transporter superfamily. Lipoprotein translocase (TC 3.A.1.125) family. In terms of assembly, the complex is composed of two ATP-binding proteins (LolD) and two transmembrane proteins (LolC and LolE).

The protein localises to the cell inner membrane. Its function is as follows. Part of the ABC transporter complex LolCDE involved in the translocation of mature outer membrane-directed lipoproteins, from the inner membrane to the periplasmic chaperone, LolA. Responsible for the formation of the LolA-lipoprotein complex in an ATP-dependent manner. This chain is Lipoprotein-releasing system ATP-binding protein LolD, found in Rickettsia bellii (strain RML369-C).